We begin with the raw amino-acid sequence, 267 residues long: Beta-lactamase OXA-5 (267 aa).

Positions 1 to 19 are cleaved as a signal peptide; that stretch reads MKTIAAYLVLVFYASTALS. Ser67 (acyl-ester intermediate) is an active-site residue. At Lys70 the chain carries N6-carboxylysine. A substrate-binding site is contributed by 205 to 207; it reads KTG.

This sequence belongs to the class-D beta-lactamase family.

It carries out the reaction a beta-lactam + H2O = a substituted beta-amino acid. Inhibited by clavulanic acid. Hydrolyzes both oxacillin and methicillin. The sequence is that of Beta-lactamase OXA-5 (bla) from Pseudomonas aeruginosa.